Here is a 480-residue protein sequence, read N- to C-terminus: Protein U54 (480 aa).

In Elephas maximus (Indian elephant), this protein is Protein U54.